A 507-amino-acid polypeptide reads, in one-letter code: RNA-binding protein Nova-1 (507 aa).

The disordered stretch occupies residues 1 to 44 (MMAAAPIQQNGTHTGVPIDLDPPDSRKRPLEAPPEAGSTKRTNT). A Bipartite nuclear localization signal motif is present at residues 27–43 (KRPLEAPPEAGSTKRTN). Residues 49–116 (QYFLKVLIPS…EALNAVHGFI (68 aa)) enclose the KH 1 domain. The segment at 139 to 171 (QTTVNPDRIKQTLPSSPTTTKSSPSDPMTTSRA) is disordered. The span at 150-169 (TLPSSPTTTKSSPSDPMTTS) shows a compositional bias: low complexity. Residue Ser154 is modified to Phosphoserine. KH domains follow at residues 171-237 (ANQV…VELI) and 421-488 (KDVV…QYLI). The interval 419–503 (GSKDVVEIAV…YEQGVRAANP (85 aa)) is required for RNA binding.

Interacts with PTBP2; the interaction is direct. In terms of tissue distribution, expressed in neurons of the cortex, sub-cortex, cerebellum and brainstem (at protein level). Expressed in motor neurons, but not in glia.

The protein localises to the nucleus. Its function is as follows. Functions to regulate alternative splicing in neurons by binding pre-mRNA in a sequence-specific manner to activate exon inclusion or exclusion. It binds specifically to the sequences 5'-YCAY-3' and regulates splicing in only a subset of regulated exons. Binding to an exonic 5'-YCAY-3' cluster changes the protein complexes assembled on pre-mRNA, blocking U1 snRNP binding and exon inclusion, whereas binding to an intronic 5'-YCAY-3' cluster enhances spliceosome assembly and exon inclusion. Binding to 5'-YCAY-3' clusters results in a local and asymmetric action to regulate spliceosome assembly and alternative splicing in neurons. Binding to an exonic 5'-YCAY-3' cluster changed the protein complexes assembled on pre-mRNA, blocking U1 snRNP (small nuclear ribonucleoprotein) binding and exon inclusion, whereas binding to an intronic 5'-YCAY-3' cluster enhanced spliceosome assembly and exon inclusion. With NOVA1, they perform unique biological functions in different brain areas and cell types. Autoregulates its own expression by acting as a splicing repressor. Acts to activate the inclusion of exon E3A in the glycine receptor alpha-2 chain and of exon E9 in gamma-aminobutyric-acid receptor gamma-2 subunit via a distal downstream UCAU-rich intronic splicing enhancer. Acts to regulate a novel glycine receptor alpha-2 chain splice variant (alpha-2N) in developing spinal cord. The polypeptide is RNA-binding protein Nova-1 (Mus musculus (Mouse)).